The chain runs to 501 residues: ADP,ATP carrier protein 3 (501 aa).

A run of 12 helical transmembrane segments spans residues 23–43 (LKLF…FGAL), 59–79 (IISF…TVLY), 90–110 (YIFY…AYII), 146–166 (YALM…LMFW), 183–203 (PVLG…LVFF), 227–247 (IILQ…MFLF), 293–313 (IALL…PWKA), 326–346 (VNFM…FMII), 361–381 (LLTP…IIFI), 383–403 (EIGT…VGAI), 446–466 (FGKS…PTAT), and 470–490 (IIIY…WNII).

This sequence belongs to the ADP/ATP translocase tlc family.

The protein resides in the cell membrane. Its function is as follows. Provides the rickettsial cell with host ATP in exchange for rickettsial ADP. This is an obligate exchange system. This energy acquiring activity is an important component of rickettsial parasitism. The chain is ADP,ATP carrier protein 3 (tlcC) from Rickettsia typhi (strain ATCC VR-144 / Wilmington).